Consider the following 525-residue polypeptide: Glutamate--cysteine ligase (525 aa).

This sequence belongs to the glutamate--cysteine ligase type 1 family. Type 1 subfamily.

It carries out the reaction L-cysteine + L-glutamate + ATP = gamma-L-glutamyl-L-cysteine + ADP + phosphate + H(+). The protein operates within sulfur metabolism; glutathione biosynthesis; glutathione from L-cysteine and L-glutamate: step 1/2. This Vibrio vulnificus (strain CMCP6) protein is Glutamate--cysteine ligase.